The sequence spans 278 residues: NAD kinase (278 aa).

Residue Asp-56 is the Proton acceptor of the active site. NAD(+) is bound by residues 56-57 (DG), 132-133 (NE), Arg-158, Asp-160, and 171-176 (TAYNKS).

It belongs to the NAD kinase family. A divalent metal cation is required as a cofactor.

It localises to the cytoplasm. The catalysed reaction is NAD(+) + ATP = ADP + NADP(+) + H(+). Its function is as follows. Involved in the regulation of the intracellular balance of NAD and NADP, and is a key enzyme in the biosynthesis of NADP. Catalyzes specifically the phosphorylation on 2'-hydroxyl of the adenosine moiety of NAD to yield NADP. This is NAD kinase from Streptococcus agalactiae serotype III (strain NEM316).